An 82-amino-acid polypeptide reads, in one-letter code: Omega-conotoxin PnVIB (82 aa).

The signal sequence occupies residues 1–22 (MKLTCMMIVAVLFLTAWTVVTA). Residues 23 to 52 (EPHSSNVLENLYLKAHHEMENPEASKLNTR) constitute a propeptide that is removed on maturation. Intrachain disulfides connect Cys-56–Cys-73, Cys-63–Cys-77, and Cys-72–Cys-81.

Expressed by the venom duct.

The protein resides in the secreted. Omega-conotoxins act at presynaptic membranes, they bind and block voltage-gated calcium channels (Cav). Acts on high voltage-activated (HVA) calcium currents in molluscan neurons. This Conus pennaceus (Feathered cone) protein is Omega-conotoxin PnVIB.